The following is a 354-amino-acid chain: MALTTHSGKLIPELQFKAHHFIDKTTVLYGPSKTGKTVYVKHIMKILQPHIEQILVVAPSEPSNRSYEGFVHPTLIHYRLWLADKQKKNDNKGAERFLEAIWQRQTMMSSIYSRVNNIDMLKTLYHKLPIDIQQKENKNIAKVECLKAEQTDQKKEEKITSLYQQLLKKIIIQNIHMYKNLCLTEDEKFTLNYINLNPRLLLILDDCAAELHPLFTKEIFKKFFYQNRHCFISMIICCQDDTDLPANLRKNAFVSIFTNASICMSNFSRQSNRYSKQDKEYVEEISHIVFKGYRKLVYIREDENRQHFYHSTVPLPTAFSFGSKALLKLCKAVYSKEVVIDKSNPYWSKFRLNF.

Belongs to the asfivirus B354L family.

This is an uncharacterized protein from Ornithodoros (relapsing fever ticks).